Reading from the N-terminus, the 919-residue chain is MKFAYRFSNLLGTVYRCGNLNFTHDGNSVISPVGNRVTVFDLKNNRSNTLPLATKYNIKCVGLSPDGRLAIIVDEGGAALLVSLVCRSVLHHFHFKGSVHSVSFSPDGRKFVVTKGNIAQMYHAPGKKREFNAFVLDKTYFGPYDETTCIDWTDDSKCFVVGSKDMSTWVFGAERWDNLIYYALSGHKDAIVACFFESNSLDLYSLSQDGALCVWQCDTPPEGLRLKAPRGWKADILQREKEEEEEDEEEGDRETTIRGKTTPAEQERVGKVKYSRLAKYFLNKEGDFNNLTSAAYHKKTHLLVTGFASGIFHLHELPEFNLIHSLSISDQRVASVAINSSGDWIAFGCSGMGQLLVWEWQSESYVLKQQGHFNSMVALAYSPDGQYIVTGGDDGKVKVWNTLSGFCFVTLTEHSSGVTGVTFTTTGHVIVTSSLDGTVRAFDLHRYRNFRTFTSPRPTQFSCVAVDSSGEIVSAGAQDSFEIFVWSMQTGRLLDVLSGHEGPVSGLCFNPMKSILASASWDKTVRLWDMFDSWRTKETLTLTSDALAVTFRPDGAELAVATLNSQITFWDPENAVQVGSIEGRHDLKTGRKELDKITAKHSAKGKAFTTLCYSADGQSILAGGMSKFVCLYHVREQILVKRFELSCNLSLDAMEEFLNRRKMTEFGNLALIDQDAGEENGVAVPLPGVRKGDMSSRHFKPEIRVTSLRFSPTGRCWAATSTEGLLIFSLDAQMLFDPFELDTSVTPGRIREALRQREFTRAILMAFRLNEKKLAQEALEAVPQNEIEVVSTSLPELYVVKVLEFLAASFEESRHLEFYLIWTQKLLMSHGQRLKSRAGQLLPVVQFLQKGLQRHLDDVSKLCDWNRFNIQYVLAVSKQRGMKRTLEPVDTEEDSDASDEDSLHLLRAAGEEEEEEMLI.

5 WD repeats span residues 12–50 (GTVY…SNTL), 53–93 (ATKY…LHHF), 94–132 (HFKG…REFN), 142–181 (GPYD…NLIY), and 186–225 (GHKD…EGLR). N6-acetyllysine is present on Lys55. The tract at residues 238-266 (QREKEEEEEDEEEGDRETTIRGKTTPAEQ) is disordered. Positions 242-252 (EEEEEDEEEGD) are enriched in acidic residues. 9 WD repeats span residues 286–325 (GDFN…LIHS), 328–368 (ISDQ…YVLK), 371–410 (GHFN…CFVT), 413–452 (EHSS…NFRT), 456–498 (PRPT…DVLS), 499–538 (GHEG…RTKE), 541–580 (TLTS…QVGS), 603–642 (AKGK…LVKR), and 700–740 (KPEI…DPFE). Residues 885-919 (TLEPVDTEEDSDASDEDSLHLLRAAGEEEEEEMLI) are disordered. The span at 889-900 (VDTEEDSDASDE) shows a compositional bias: acidic residues. The residue at position 891 (Thr891) is a Phosphothreonine. Phosphoserine is present on residues Ser895, Ser898, and Ser902.

Belongs to the WD repeat PWP2 family. As to quaternary structure, part of the small subunit (SSU) processome, composed of more than 70 proteins and the RNA chaperone small nucleolar RNA (snoRNA) U3.

The protein resides in the nucleus. The protein localises to the nucleolus. Part of the small subunit (SSU) processome, first precursor of the small eukaryotic ribosomal subunit. During the assembly of the SSU processome in the nucleolus, many ribosome biogenesis factors, an RNA chaperone and ribosomal proteins associate with the nascent pre-rRNA and work in concert to generate RNA folding, modifications, rearrangements and cleavage as well as targeted degradation of pre-ribosomal RNA by the RNA exosome. This chain is Periodic tryptophan protein 2 homolog (Pwp2), found in Mus musculus (Mouse).